Here is an 864-residue protein sequence, read N- to C-terminus: DNA mismatch repair protein MutS (864 aa).

607–614 (GPNMGGKS) contacts ATP.

It belongs to the DNA mismatch repair MutS family.

Functionally, this protein is involved in the repair of mismatches in DNA. It is possible that it carries out the mismatch recognition step. This protein has a weak ATPase activity. The sequence is that of DNA mismatch repair protein MutS from Neisseria meningitidis serogroup B (strain ATCC BAA-335 / MC58).